The primary structure comprises 267 residues: Hydroxypyruvate/pyruvate aldolase Bphyt_5830 (267 aa).

H48 acts as the Proton acceptor in catalysis. A divalent metal cation contacts are provided by E152 and D178.

The protein belongs to the HpcH/HpaI aldolase family. Requires a divalent metal cation as cofactor.

The catalysed reaction is D-glyceraldehyde + 3-hydroxypyruvate = 2-dehydro-D-galactonate. It carries out the reaction D-glyceraldehyde + 3-hydroxypyruvate = (3R,4S,5R)-3,4,5,6-tetrahydroxy-2-oxohexanoate. It catalyses the reaction D-glyceraldehyde + pyruvate = 2-dehydro-3-deoxy-L-galactonate. Aldolase which can catalyze in vitro the aldolisation reaction between hydroxypyruvate (HPA) or pyruvate (PA) and D-glyceraldehyde (D-GA). The condensation of hydroxypyruvate and D-glyceraldehyde produces 2-dehydro-D-galactonate as the major product and (3R,4S,5R)-3,4,5,6-tetrahydroxy-2-oxohexanoate. The condensation of pyruvate and D-glyceraldehyde produces 2-dehydro-3-deoxy-L-galactonate. This Paraburkholderia phytofirmans (strain DSM 17436 / LMG 22146 / PsJN) (Burkholderia phytofirmans) protein is Hydroxypyruvate/pyruvate aldolase Bphyt_5830.